Reading from the N-terminus, the 90-residue chain is DNA-directed RNA polymerase subunit omega (90 aa).

The interval Q70–R90 is disordered.

The protein belongs to the RNA polymerase subunit omega family. As to quaternary structure, the RNAP catalytic core consists of 2 alpha, 1 beta, 1 beta' and 1 omega subunit. When a sigma factor is associated with the core the holoenzyme is formed, which can initiate transcription.

The catalysed reaction is RNA(n) + a ribonucleoside 5'-triphosphate = RNA(n+1) + diphosphate. Its function is as follows. Promotes RNA polymerase assembly. Latches the N- and C-terminal regions of the beta' subunit thereby facilitating its interaction with the beta and alpha subunits. This Vibrio cholerae serotype O1 (strain ATCC 39541 / Classical Ogawa 395 / O395) protein is DNA-directed RNA polymerase subunit omega.